The primary structure comprises 288 residues: Small ribosomal subunit protein uS2 (288 aa).

Residues Glu-259–Ala-276 show a composition bias toward low complexity. Residues Glu-259–Ala-288 form a disordered region.

The protein belongs to the universal ribosomal protein uS2 family.

This chain is Small ribosomal subunit protein uS2, found in Maricaulis maris (strain MCS10) (Caulobacter maris).